Reading from the N-terminus, the 314-residue chain is Polyamine aminopropyltransferase (314 aa).

The 238-residue stretch at 4-241 folds into the PABS domain; that stretch reads GMYFFEHVTP…LNFGFLLASD (238 aa). An S-methyl-5'-thioadenosine-binding site is contributed by Gln33. Positions 64 and 88 each coordinate spermidine. Residues Asp108 and 140–141 each bind S-methyl-5'-thioadenosine; that span reads DA. Asp158 acts as the Proton acceptor in catalysis. An S-methyl-5'-thioadenosine-binding site is contributed by Pro168.

Belongs to the spermidine/spermine synthase family. As to quaternary structure, homodimer or homotetramer.

The protein localises to the cytoplasm. The enzyme catalyses S-adenosyl 3-(methylsulfanyl)propylamine + putrescine = S-methyl-5'-thioadenosine + spermidine + H(+). Its pathway is amine and polyamine biosynthesis; spermidine biosynthesis; spermidine from putrescine: step 1/1. Its function is as follows. Catalyzes the irreversible transfer of a propylamine group from the amino donor S-adenosylmethioninamine (decarboxy-AdoMet) to putrescine (1,4-diaminobutane) to yield spermidine. This is Polyamine aminopropyltransferase from Thermus thermophilus (strain ATCC BAA-163 / DSM 7039 / HB27).